We begin with the raw amino-acid sequence, 113 residues long: Large ribosomal subunit protein eL31A (113 aa).

This sequence belongs to the eukaryotic ribosomal protein eL31 family. In terms of assembly, component of the large ribosomal subunit (LSU). Mature yeast ribosomes consist of a small (40S) and a large (60S) subunit. The 40S small subunit contains 1 molecule of ribosomal RNA (18S rRNA) and 33 different proteins (encoded by 57 genes). The large 60S subunit contains 3 rRNA molecules (25S, 5.8S and 5S rRNA) and 46 different proteins (encoded by 81 genes).

The protein resides in the cytoplasm. In terms of biological role, component of the ribosome, a large ribonucleoprotein complex responsible for the synthesis of proteins in the cell. The small ribosomal subunit (SSU) binds messenger RNAs (mRNAs) and translates the encoded message by selecting cognate aminoacyl-transfer RNA (tRNA) molecules. The large subunit (LSU) contains the ribosomal catalytic site termed the peptidyl transferase center (PTC), which catalyzes the formation of peptide bonds, thereby polymerizing the amino acids delivered by tRNAs into a polypeptide chain. The nascent polypeptides leave the ribosome through a tunnel in the LSU and interact with protein factors that function in enzymatic processing, targeting, and the membrane insertion of nascent chains at the exit of the ribosomal tunnel. The protein is Large ribosomal subunit protein eL31A of Saccharomyces cerevisiae (strain ATCC 204508 / S288c) (Baker's yeast).